A 276-amino-acid polypeptide reads, in one-letter code: Pantothenate synthetase (276 aa).

26 to 33 (MGFLHAGH) is an ATP binding site. The active-site Proton donor is H33. Q57 provides a ligand contact to (R)-pantoate. Q57 lines the beta-alanine pocket. 143–146 (GQKD) contacts ATP. Q149 contacts (R)-pantoate. ATP is bound by residues I172 and 180 to 183 (MSSR).

It belongs to the pantothenate synthetase family. In terms of assembly, homodimer.

It localises to the cytoplasm. The catalysed reaction is (R)-pantoate + beta-alanine + ATP = (R)-pantothenate + AMP + diphosphate + H(+). The protein operates within cofactor biosynthesis; (R)-pantothenate biosynthesis; (R)-pantothenate from (R)-pantoate and beta-alanine: step 1/1. Catalyzes the condensation of pantoate with beta-alanine in an ATP-dependent reaction via a pantoyl-adenylate intermediate. This chain is Pantothenate synthetase, found in Herpetosiphon aurantiacus (strain ATCC 23779 / DSM 785 / 114-95).